A 229-amino-acid chain; its full sequence is Serine acetyltransferase (229 aa).

This sequence belongs to the transferase hexapeptide repeat family.

Its subcellular location is the cytoplasm. The enzyme catalyses L-serine + acetyl-CoA = O-acetyl-L-serine + CoA. The protein operates within amino-acid biosynthesis; L-cysteine biosynthesis; L-cysteine from L-serine: step 1/2. In terms of biological role, catalyzes the acetylation of serine by acetyl-CoA to produce O-acetylserine (OAS). The sequence is that of Serine acetyltransferase (cysE) from Mycobacterium tuberculosis (strain ATCC 25618 / H37Rv).